A 554-amino-acid chain; its full sequence is Glucose-6-phosphate isomerase (554 aa).

Glu359 serves as the catalytic Proton donor. Active-site residues include His390 and Lys518.

It belongs to the GPI family.

The protein resides in the cytoplasm. It catalyses the reaction alpha-D-glucose 6-phosphate = beta-D-fructose 6-phosphate. The protein operates within carbohydrate biosynthesis; gluconeogenesis. Its pathway is carbohydrate degradation; glycolysis; D-glyceraldehyde 3-phosphate and glycerone phosphate from D-glucose: step 2/4. Its function is as follows. Catalyzes the reversible isomerization of glucose-6-phosphate to fructose-6-phosphate. This Pseudomonas fluorescens (strain SBW25) protein is Glucose-6-phosphate isomerase.